The following is a 232-amino-acid chain: tRNA1(Val) (adenine(37)-N6)-methyltransferase (232 aa).

Belongs to the methyltransferase superfamily. tRNA (adenine-N(6)-)-methyltransferase family.

It localises to the cytoplasm. The catalysed reaction is adenosine(37) in tRNA1(Val) + S-adenosyl-L-methionine = N(6)-methyladenosine(37) in tRNA1(Val) + S-adenosyl-L-homocysteine + H(+). Its function is as follows. Specifically methylates the adenine in position 37 of tRNA(1)(Val) (anticodon cmo5UAC). This Haemophilus influenzae (strain PittEE) protein is tRNA1(Val) (adenine(37)-N6)-methyltransferase.